We begin with the raw amino-acid sequence, 230 residues long: ATP synthase subunit a (230 aa).

A run of 6 helical transmembrane segments spans residues 26–46 (ANAVVYTWTVIVLLLVLSLIA), 83–103 (FFPLIATLAIFILVSNLVGLI), 112–132 (NVNTTAACAIVVFLATHVVGI), 143–163 (FMGPIWWLAPLMFFIEVIGHL), 182–202 (LVLMIFFALAPFLVPLPMMLM), and 203–223 (GVLVSFIQAFVFMLLAMIYIQ).

Belongs to the ATPase A chain family. In terms of assembly, F-type ATPases have 2 components, CF(1) - the catalytic core - and CF(0) - the membrane proton channel. CF(1) has five subunits: alpha(3), beta(3), gamma(1), delta(1), epsilon(1). CF(0) has three main subunits: a(1), b(2) and c(9-12). The alpha and beta chains form an alternating ring which encloses part of the gamma chain. CF(1) is attached to CF(0) by a central stalk formed by the gamma and epsilon chains, while a peripheral stalk is formed by the delta and b chains.

It localises to the cell inner membrane. In terms of biological role, key component of the proton channel; it plays a direct role in the translocation of protons across the membrane. This is ATP synthase subunit a from Trichlorobacter lovleyi (strain ATCC BAA-1151 / DSM 17278 / SZ) (Geobacter lovleyi).